A 211-amino-acid polypeptide reads, in one-letter code: uncharacterized protein (211 aa).

This is an uncharacterized protein from Methanocaldococcus jannaschii (strain ATCC 43067 / DSM 2661 / JAL-1 / JCM 10045 / NBRC 100440) (Methanococcus jannaschii).